The primary structure comprises 538 residues: Capsular polysaccharide biosynthesis protein RkpI (538 aa).

The next 6 membrane-spanning stretches (helical) occupy residues 16–36 (LHDYPIALTLGCYLLSCAVIF), 70–90 (VIALVFAGFFAISWRPLYAAA), 114–134 (LVFSDIALVADVFKYKTIFYA), 139–159 (IVFWIVAFLYVFGVSALYMYF), 170–190 (LFWVLVMVGIAAGPWGLLFYG), and 212–232 (NTVRFGTFASVVFHFIIWLGV).

The protein localises to the cell membrane. It participates in capsule biogenesis; capsule polysaccharide biosynthesis. Functionally, involved in antigen K (capsular polysaccharide) biosynthesis. The protein is Capsular polysaccharide biosynthesis protein RkpI (rkpI) of Rhizobium meliloti (strain 1021) (Ensifer meliloti).